The sequence spans 902 residues: Cytosolic 10-formyltetrahydrofolate dehydrogenase (902 aa).

Residues Met-1–Ala-310 are hydrolase domain. Ser-9 carries the phosphoserine modification. Lys-38 carries the N6-succinyllysine modification. Gln-88–Ile-90 provides a ligand contact to (6R)-10-formyltetrahydrofolate. Residue His-106 is the Proton donor of the active site. Asp-142 is a (6R)-10-formyltetrahydrofolate binding site. Residues Glu-318–Leu-395 form the Carrier domain. The residue at position 354 (Ser-354) is an O-(pantetheine 4'-phosphoryl)serine. The segment at Thr-417–Tyr-902 is aldehyde dehydrogenase domain. NADP(+) contacts are provided by residues Ile-571–Trp-573 and Lys-597–Gln-600. Phosphoserine occurs at positions 629 and 631. Residues Gly-630 to Gln-635 and Gly-650 to Ser-651 each bind NADP(+). Lys-660 carries the N6-succinyllysine modification. Catalysis depends on Glu-673, which acts as the Proton acceptor. Glu-673–Leu-674 serves as a coordination point for NADP(+). Catalysis depends on Cys-707, which acts as the Proton donor. NADP(+) is bound at residue Lys-757. Lys-767 carries the post-translational modification N6-succinyllysine. Glu-804–Phe-806 contributes to the NADP(+) binding site. At Ser-825 the chain carries Phosphoserine. Lys-882 is modified (N6-acetyllysine).

It in the N-terminal section; belongs to the GART family. This sequence in the C-terminal section; belongs to the aldehyde dehydrogenase family. ALDH1L subfamily. Homotetramer. Phosphopantetheinylation at Ser-354 by AASDHPPT is required for the formyltetrahydrofolate dehydrogenase activity. In terms of tissue distribution, highly expressed in liver (at protein level). Also expressed in pancreas, brain and lung (at protein level).

It is found in the cytoplasm. The protein resides in the cytosol. The enzyme catalyses (6R)-10-formyltetrahydrofolate + NADP(+) + H2O = (6S)-5,6,7,8-tetrahydrofolate + CO2 + NADPH + H(+). In terms of biological role, cytosolic 10-formyltetrahydrofolate dehydrogenase that catalyzes the NADP(+)-dependent conversion of 10-formyltetrahydrofolate to tetrahydrofolate and carbon dioxide. May also have an NADP(+)-dependent aldehyde dehydrogenase activity towards formaldehyde, acetaldehyde, propionaldehyde, and benzaldehyde. The sequence is that of Cytosolic 10-formyltetrahydrofolate dehydrogenase from Mus musculus (Mouse).